Here is a 1190-residue protein sequence, read N- to C-terminus: DNA-directed RNA polymerase subunit beta (1190 aa).

It belongs to the RNA polymerase beta chain family. The RNAP catalytic core consists of 2 alpha, 1 beta, 1 beta' and 1 omega subunit. When a sigma factor is associated with the core the holoenzyme is formed, which can initiate transcription.

The catalysed reaction is RNA(n) + a ribonucleoside 5'-triphosphate = RNA(n+1) + diphosphate. DNA-dependent RNA polymerase catalyzes the transcription of DNA into RNA using the four ribonucleoside triphosphates as substrates. The polypeptide is DNA-directed RNA polymerase subunit beta (Geobacillus thermodenitrificans (strain NG80-2)).